The sequence spans 195 residues: Imidazoleglycerol-phosphate dehydratase (195 aa).

This sequence belongs to the imidazoleglycerol-phosphate dehydratase family.

It is found in the cytoplasm. It carries out the reaction D-erythro-1-(imidazol-4-yl)glycerol 3-phosphate = 3-(imidazol-4-yl)-2-oxopropyl phosphate + H2O. It participates in amino-acid biosynthesis; L-histidine biosynthesis; L-histidine from 5-phospho-alpha-D-ribose 1-diphosphate: step 6/9. The polypeptide is Imidazoleglycerol-phosphate dehydratase (Burkholderia cenocepacia (strain ATCC BAA-245 / DSM 16553 / LMG 16656 / NCTC 13227 / J2315 / CF5610) (Burkholderia cepacia (strain J2315))).